A 336-amino-acid polypeptide reads, in one-letter code: MTEIQKPYDLKGRSLLKESDFTKAEFEGLIDFAITLKEYKKNGIKHHYLSGKNIALLFEKNSTRTRAAFTVASIDLGAHPEFLGKNDIQLGKKESVEDTAKVLGRMFDGIEFRGFSQQAVEDLAKFSGVPVWNGLTDDWHPTQMLADFMTIKENFGYLEGINLTYVGDGRNNIAHSLMVAGAMLGVNVRICTPKSLNPKEAYVDIAKEKASQYGGSIMITDNIAEAVENTDAIYTDVWVSMGEESEFEQRINLLKDYQVNQQMFDLTGKDSTIFLHCLPAFHDTNTLYGQEIYEKYGLAEMEVTDQIFRSEHSKVFDQAENRMHTIKAVMAATLGS.

Carbamoyl phosphate is bound by residues 62–65, Gln89, Arg113, and 140–143; these read STRT and HPTQ. L-ornithine-binding positions include Asn172, Asp236, and 240–241; that span reads SM. Residues 277 to 278 and Arg322 each bind carbamoyl phosphate; that span reads CL.

The protein belongs to the aspartate/ornithine carbamoyltransferase superfamily. OTCase family.

Its subcellular location is the cytoplasm. The enzyme catalyses carbamoyl phosphate + L-ornithine = L-citrulline + phosphate + H(+). The protein operates within amino-acid degradation; L-arginine degradation via ADI pathway; carbamoyl phosphate from L-arginine: step 2/2. Reversibly catalyzes the transfer of the carbamoyl group from carbamoyl phosphate (CP) to the N(epsilon) atom of ornithine (ORN) to produce L-citrulline. The polypeptide is Ornithine carbamoyltransferase, catabolic (arcB) (Staphylococcus aureus (strain N315)).